The following is a 353-amino-acid chain: uncharacterized protein (353 aa).

3 disordered regions span residues 1 to 24 (MSTS…QQSQ), 245 to 280 (NKSS…EKVP), and 305 to 353 (AAGK…DLNN). Residues 9–24 (NKKNNTKQQKYQQQSQ) are compositionally biased toward low complexity. Basic and acidic residues predominate over residues 254–280 (KSGDKSTVKSTDKQVEKKVEESSEKVP). The span at 321-332 (VTTSTSESTVEV) shows a compositional bias: low complexity. Residues 342–353 (EPDEEVFEDLNN) show a composition bias toward acidic residues.

This is an uncharacterized protein from Acanthamoeba polyphaga mimivirus (APMV).